A 124-amino-acid chain; its full sequence is Small ribosomal subunit protein uS13 (124 aa).

The segment at 95-124 (GLPVRGQRTKTNARTRKGPKRTIAGKKKAK) is disordered.

This sequence belongs to the universal ribosomal protein uS13 family. Part of the 30S ribosomal subunit. Forms a loose heterodimer with protein S19. Forms two bridges to the 50S subunit in the 70S ribosome.

Located at the top of the head of the 30S subunit, it contacts several helices of the 16S rRNA. In the 70S ribosome it contacts the 23S rRNA (bridge B1a) and protein L5 of the 50S subunit (bridge B1b), connecting the 2 subunits; these bridges are implicated in subunit movement. Contacts the tRNAs in the A and P-sites. The sequence is that of Small ribosomal subunit protein uS13 from Rhodococcus erythropolis (strain PR4 / NBRC 100887).